The chain runs to 154 residues: MATFSQKPTEVVKKWVIIDAENLVLGRLAAFVANRLRGKHKATFTPHVDDGDNVIVINADKISLTGKKYTDKKYYWHTGYIGGIKKRTARQILEGRFPERVVEKAVERMIPRGPLGRRQLKNLRVYAGSQHPHAAQQPEALDVGALNRKNKRIA.

This sequence belongs to the universal ribosomal protein uL13 family. In terms of assembly, part of the 50S ribosomal subunit.

This protein is one of the early assembly proteins of the 50S ribosomal subunit, although it is not seen to bind rRNA by itself. It is important during the early stages of 50S assembly. The sequence is that of Large ribosomal subunit protein uL13 from Bartonella henselae (strain ATCC 49882 / DSM 28221 / CCUG 30454 / Houston 1) (Rochalimaea henselae).